The primary structure comprises 267 residues: Type II pantothenate kinase (267 aa).

Asp6 to Lys13 lines the ATP pocket. The Proton acceptor role is filled by Glu70. Residues Thr99, Gly121–Gln125, Tyr137, and Ser225 contribute to the ATP site.

The protein belongs to the type II pantothenate kinase family. In terms of assembly, homodimer.

It localises to the cytoplasm. It carries out the reaction (R)-pantothenate + ATP = (R)-4'-phosphopantothenate + ADP + H(+). It functions in the pathway cofactor biosynthesis; coenzyme A biosynthesis; CoA from (R)-pantothenate: step 1/5. Its function is as follows. Catalyzes the phosphorylation of pantothenate (Pan), the first step in CoA biosynthesis. The protein is Type II pantothenate kinase of Staphylococcus aureus (strain USA300).